The chain runs to 509 residues: ATP synthase subunit alpha, mitochondrial (509 aa).

171 to 178 provides a ligand contact to ATP; the sequence is GDRQTGKT.

This sequence belongs to the ATPase alpha/beta chains family. F-type ATPases have 2 components, CF(1) - the catalytic core - and CF(0) - the membrane proton channel. CF(1) has five subunits: alpha(3), beta(3), gamma(1), delta(1), epsilon(1). CF(0) has three main subunits: a, b and c.

It localises to the mitochondrion. Its subcellular location is the mitochondrion inner membrane. Functionally, mitochondrial membrane ATP synthase (F(1)F(0) ATP synthase or Complex V) produces ATP from ADP in the presence of a proton gradient across the membrane which is generated by electron transport complexes of the respiratory chain. F-type ATPases consist of two structural domains, F(1) - containing the extramembraneous catalytic core, and F(0) - containing the membrane proton channel, linked together by a central stalk and a peripheral stalk. During catalysis, ATP synthesis in the catalytic domain of F(1) is coupled via a rotary mechanism of the central stalk subunits to proton translocation. Subunits alpha and beta form the catalytic core in F(1). Rotation of the central stalk against the surrounding alpha(3)beta(3) subunits leads to hydrolysis of ATP in three separate catalytic sites on the beta subunits. Subunit alpha does not bear the catalytic high-affinity ATP-binding sites. In Nicotiana plumbaginifolia (Leadwort-leaved tobacco), this protein is ATP synthase subunit alpha, mitochondrial (ATPA).